A 638-amino-acid chain; its full sequence is uncharacterized protein (638 aa).

An N-terminal signal peptide occupies residues 1–31; sequence MKFIKFNDSTIDSFLFMMLTDLAKTLTKSEA. 4 stretches are compositionally biased toward basic and acidic residues: residues 247–256, 273–284, 301–310, and 329–342; these read EEKKAPKLSD, EEMPTWHRETEA, DLGKDASREG, and RKDY…ESQK. Disordered regions lie at residues 247 to 285 and 301 to 354; these read EEKK…TEAP and DLGK…ADGK. Residues 445–632 form the VWFA domain; it reads FTLLVDCSAS…DVLYPLLKKL (188 aa).

This is an uncharacterized protein from Bacillus subtilis (strain 168).